The primary structure comprises 127 residues: Large ribosomal subunit protein bL20 (127 aa).

Belongs to the bacterial ribosomal protein bL20 family.

Its function is as follows. Binds directly to 23S ribosomal RNA and is necessary for the in vitro assembly process of the 50S ribosomal subunit. It is not involved in the protein synthesizing functions of that subunit. This is Large ribosomal subunit protein bL20 from Bifidobacterium longum (strain DJO10A).